The sequence spans 1706 residues: PR domain zinc finger protein 2 (1706 aa).

In terms of domain architecture, SET spans 27–140 (EEVRLFPSAV…PGEELLVWYN (114 aa)). The segment at 154–342 (ERASARSKRS…TPPPHTPRAR (189 aa)) is disordered. Basic residues predominate over residues 158 to 183 (ARSKRSSPKSRRGKKKSHENKNKGIR). Polar residues predominate over residues 185–199 (HPTQLKASELDSTFA). Residues 258-294 (TDCEVNDVEEEELEEEEELEEEEEEELGEDGVEEADM) are compositionally biased toward acidic residues. Over residues 299 to 313 (SAKEPEIRCEEKPED) the composition is skewed to basic and acidic residues. 2 consecutive C2H2-type zinc fingers follow at residues 355-377 (FPCQ…MHIH) and 385-407 (FKCK…ERRH). 3 disordered regions span residues 400 to 446 (RRRH…QLGQ), 492 to 542 (RRHQ…EEEG), and 618 to 655 (LLKD…STAP). The residue at position 416 (serine 416) is a Phosphoserine. The segment covering 427–439 (DGKGENVTSKDES) has biased composition (basic and acidic residues). Residues 476-499 (HPCKYCKKVFGTHTNMRRHQRRVH) form a C2H2-type 3 zinc finger. Serine 637 carries the phosphoserine modification. Glycyl lysine isopeptide (Lys-Gly) (interchain with G-Cter in SUMO2) cross-links involve residues lysine 645, lysine 684, and lysine 686. Disordered regions lie at residues 724–794 (TSSR…SPPC), 823–1075 (SGVK…SSVV), and 1088–1112 (VTFK…AGGQ). The segment covering 733–743 (SSPPSSPQHSP) has biased composition (low complexity). Serine 738 bears the Phosphoserine mark. Residue lysine 769 forms a Glycyl lysine isopeptide (Lys-Gly) (interchain with G-Cter in SUMO2) linkage. A phosphoserine mark is found at serine 776, serine 780, and serine 791. The segment covering 823–832 (SGVKQKSEGT) has biased composition (polar residues). Positions 846–863 (SVHKKPCDSEGKEFKENH) are enriched in basic and acidic residues. Residues lysine 860 and lysine 870 each participate in a glycyl lysine isopeptide (Lys-Gly) (interchain with G-Cter in SUMO2) cross-link. Composition is skewed to polar residues over residues 891–912 (SLPT…SPDT) and 943–952 (LQTASLSSGQ). The span at 962–983 (PSSPPPCPPVLTVATPPPPLLP) shows a compositional bias: pro residues. Polar residues predominate over residues 993-1009 (DASPQQCPSPFSNTTAQ). Low complexity predominate over residues 1010–1019 (SPLPILSPTV). Positions 1020 to 1030 (SPSPSPIPPVE) are enriched in pro residues. A compositionally biased stretch (low complexity) spans 1034 to 1062 (SAASPGPPTLSSSSSSSSSFPSSSCSSTS). Positions 1091–1106 (KQEESESEGLKPKEEA) are enriched in basic and acidic residues. 3 consecutive C2H2-type zinc fingers follow at residues 1123–1145 (FICN…LSVH), 1151–1174 (FKCE…FLLH), and 1180–1203 (FVCS…RDLH). Glycyl lysine isopeptide (Lys-Gly) (interchain with G-Cter in SUMO2) cross-links involve residues lysine 1136 and lysine 1140. Polar residues predominate over residues 1218 to 1227 (LRPQNFTDPS). Positions 1218–1251 (LRPQNFTDPSKANVEHMPSLPEEPLETSREEELN) are disordered. Residue lysine 1269 forms a Glycyl lysine isopeptide (Lys-Gly) (interchain with G-Cter in SUMO2) linkage. Residues 1321 to 1343 (IRCTKCGKGVDNMPELHKHILAC) form a C2H2-type 7; atypical zinc finger. Residues 1443–1465 (HICPYCDREFTYIGSLNKHAAFS) form a C2H2-type 8; atypical zinc finger. Residues 1466–1563 (CPKKPLSPSK…KKASSSSLRN (98 aa)) form a disordered region. A compositionally biased stretch (basic residues) spans 1474–1486 (SKRKVSHSSKKGG). Residues 1487–1498 (HASSSSSDRNSS) show a composition bias toward low complexity. Residues 1528–1544 (GPAQASLPSSSFRSRQN) are compositionally biased toward polar residues. A compositionally biased stretch (low complexity) spans 1548–1563 (AASVKSKKASSSSLRN).

This sequence belongs to the class V-like SAM-binding methyltransferase superfamily. In terms of assembly, binds to the retinoblastoma protein (RB). Interacts with GATA3.

The protein resides in the nucleus. It carries out the reaction L-lysyl-[histone] + S-adenosyl-L-methionine = N(6)-methyl-L-lysyl-[histone] + S-adenosyl-L-homocysteine + H(+). The enzyme catalyses L-lysyl(9)-[histone H3] + 3 S-adenosyl-L-methionine = N(6),N(6),N(6)-trimethyl-L-lysyl(9)-[histone H3] + 3 S-adenosyl-L-homocysteine + 3 H(+). Functionally, S-adenosyl-L-methionine-dependent histone methyltransferase that specifically methylates 'Lys-9' of histone H3. May function as a DNA-binding transcription factor. Binds to the macrophage-specific TPA-responsive element (MTE) of the HMOX1 (heme oxygenase 1) gene and may act as a transcriptional activator of this gene. The chain is PR domain zinc finger protein 2 (Prdm2) from Rattus norvegicus (Rat).